Reading from the N-terminus, the 170-residue chain is Adenine phosphoribosyltransferase (170 aa).

It belongs to the purine/pyrimidine phosphoribosyltransferase family. As to quaternary structure, homodimer.

It localises to the cytoplasm. The enzyme catalyses AMP + diphosphate = 5-phospho-alpha-D-ribose 1-diphosphate + adenine. The protein operates within purine metabolism; AMP biosynthesis via salvage pathway; AMP from adenine: step 1/1. Functionally, catalyzes a salvage reaction resulting in the formation of AMP, that is energically less costly than de novo synthesis. The sequence is that of Adenine phosphoribosyltransferase from Mesoplasma florum (strain ATCC 33453 / NBRC 100688 / NCTC 11704 / L1) (Acholeplasma florum).